The chain runs to 500 residues: Cytochrome P450 2D16 (500 aa).

Position 249 is a phosphoserine (serine 249). Cysteine 446 is a binding site for heme.

This sequence belongs to the cytochrome P450 family. Heme is required as a cofactor. In terms of tissue distribution, expressed at high levels in the inner zone of the adrenal cortex.

The protein resides in the endoplasmic reticulum membrane. It localises to the microsome membrane. The enzyme catalyses an organic molecule + reduced [NADPH--hemoprotein reductase] + O2 = an alcohol + oxidized [NADPH--hemoprotein reductase] + H2O + H(+). In terms of biological role, cytochromes P450 are a group of heme-thiolate monooxygenases. In liver microsomes, this enzyme is involved in an NADPH-dependent electron transport pathway. It oxidizes a variety of structurally unrelated compounds, including steroids, fatty acids, and xenobiotics. This chain is Cytochrome P450 2D16 (CYP2D16), found in Cavia porcellus (Guinea pig).